Here is an 893-residue protein sequence, read N- to C-terminus: Alpha-actinin-1 (893 aa).

The tract at residues Met1 to His248 is actin-binding. The residue at position 13 (Tyr13) is a Phosphotyrosine; by FAK1. Calponin-homology (CH) domains are found at residues Lys32–Ala136 and Thr145–Ser251. 4 Spectrin repeats span residues Gln275–Asn385, His395–Arg500, Gln510–Glu621, and Arg631–Asn734. EF-hand domains are found at residues Glu747–Asp782 and Gln788–Asp823. Residues Asp760, Asp762, Ser764, Thr766, and Glu771 each coordinate Ca(2+).

The protein belongs to the alpha-actinin family. In terms of assembly, homodimer; antiparallel. Interacts with PDLIM4 (via PDZ domain).

The protein resides in the cytoplasm. The protein localises to the cytoskeleton. It is found in the myofibril. Its subcellular location is the sarcomere. It localises to the z line. The protein resides in the cell membrane. The protein localises to the cell junction. It is found in the cell projection. Its subcellular location is the ruffle. Functionally, F-actin cross-linking protein is thought to anchor actin to a variety of intracellular structures. This is a bundling protein. The sequence is that of Alpha-actinin-1 (ACTN1) from Gallus gallus (Chicken).